The primary structure comprises 880 residues: Alanine--tRNA ligase (880 aa).

Zn(2+) contacts are provided by histidine 548, histidine 552, cysteine 651, and histidine 655.

It belongs to the class-II aminoacyl-tRNA synthetase family. Requires Zn(2+) as cofactor.

The protein resides in the cytoplasm. It carries out the reaction tRNA(Ala) + L-alanine + ATP = L-alanyl-tRNA(Ala) + AMP + diphosphate. Functionally, catalyzes the attachment of alanine to tRNA(Ala) in a two-step reaction: alanine is first activated by ATP to form Ala-AMP and then transferred to the acceptor end of tRNA(Ala). Also edits incorrectly charged Ser-tRNA(Ala) and Gly-tRNA(Ala) via its editing domain. In Tropheryma whipplei (strain TW08/27) (Whipple's bacillus), this protein is Alanine--tRNA ligase.